A 298-amino-acid chain; its full sequence is Cyclin-dependent kinase 2 (298 aa).

Met1 carries the N-acetylmethionine modification. The Protein kinase domain maps to 4–286 (FQKVEKIGEG…AKAALAHPFF (283 aa)). The residue at position 6 (Lys6) is an N6-acetyllysine. 10-18 (IGEGTYGVV) contributes to the ATP binding site. Thr14 is subject to Phosphothreonine. Tyr15 carries the post-translational modification Phosphotyrosine; by WEE1. Tyr19 bears the Phosphotyrosine mark. Residues Lys33, 81–83 (EFL), and Asp86 each bind ATP. Asp127 (proton acceptor) is an active-site residue. ATP-binding positions include 129 to 132 (KPQN) and Asp145. Mg(2+)-binding residues include Asn132 and Asp145. At Thr160 the chain carries Phosphothreonine; by CAK and CCRK.

This sequence belongs to the protein kinase superfamily. CMGC Ser/Thr protein kinase family. CDC2/CDKX subfamily. As to quaternary structure, found in a complex with CABLES1, CCNA1 and CCNE1. Interacts with CABLES1. Interacts with UHRF2. Part of a complex consisting of UHRF2, CDK2 and CCNE1. Interacts with the Speedy/Ringo proteins SPDYA and SPDYC. Interaction with SPDYA promotes kinase activation via a conformation change that alleviates obstruction of the substrate-binding cleft by the T-loop. Found in a complex with both SPDYA and CDKN1B/KIP1. Binds to RB1 and CDK7. Binding to CDKN1A (p21) leads to CDK2/cyclin E inactivation at the G1-S phase DNA damage checkpoint, thereby arresting cells at the G1-S transition during DNA repair. Associated with PTPN6 and beta-catenin/CTNNB1. Interacts with CACUL1. May interact with CEP63. Interacts with ANKRD17. Interacts with CEBPA (when phosphorylated). Forms a ternary complex with CCNA2 and CDKN1B; CDKN1B inhibits the kinase activity of CDK2 through conformational rearrangements. Interacts with cyclins A, B1, B3, D, or E. Interacts with CDK2AP2. Mg(2+) is required as a cofactor. Post-translationally, phosphorylated at Thr-160 by CDK7 in a CAK complex. Phosphorylation at Thr-160 promotes kinase activity, whereas phosphorylation at Tyr-15 by WEE1 reduces slightly kinase activity. Phosphorylated on Thr-14 and Tyr-15 during S and G2 phases before being dephosphorylated by CDC25A. In terms of processing, nitrosylated after treatment with nitric oxide (DETA-NO).

The protein localises to the cytoplasm. It is found in the cytoskeleton. The protein resides in the microtubule organizing center. It localises to the centrosome. Its subcellular location is the nucleus. The protein localises to the cajal body. It is found in the endosome. It catalyses the reaction L-seryl-[protein] + ATP = O-phospho-L-seryl-[protein] + ADP + H(+). The enzyme catalyses L-threonyl-[protein] + ATP = O-phospho-L-threonyl-[protein] + ADP + H(+). Phosphorylation at Thr-14 or Tyr-15 inactivates the enzyme, while phosphorylation at Thr-160 activates it. Stimulated by MYC. Inactivated by CDKN1A (p21). Serine/threonine-protein kinase involved in the control of the cell cycle; essential for meiosis, but dispensable for mitosis. Phosphorylates CABLES1, CTNNB1, CDK2AP2, ERCC6, NBN, USP37, p53/TP53, NPM1, CDK7, RB1, BRCA2, MYC, NPAT, EZH2. Triggers duplication of centrosomes and DNA. Acts at the G1-S transition to promote the E2F transcriptional program and the initiation of DNA synthesis, and modulates G2 progression; controls the timing of entry into mitosis/meiosis by controlling the subsequent activation of cyclin B/CDK1 by phosphorylation, and coordinates the activation of cyclin B/CDK1 at the centrosome and in the nucleus. Crucial role in orchestrating a fine balance between cellular proliferation, cell death, and DNA repair in embryonic stem cells (ESCs). Activity of CDK2 is maximal during S phase and G2; activated by interaction with cyclin E during the early stages of DNA synthesis to permit G1-S transition, and subsequently activated by cyclin A2 (cyclin A1 in germ cells) during the late stages of DNA replication to drive the transition from S phase to mitosis, the G2 phase. EZH2 phosphorylation promotes H3K27me3 maintenance and epigenetic gene silencing. Cyclin E/CDK2 prevents oxidative stress-mediated Ras-induced senescence by phosphorylating MYC. Involved in G1-S phase DNA damage checkpoint that prevents cells with damaged DNA from initiating mitosis; regulates homologous recombination-dependent repair by phosphorylating BRCA2, this phosphorylation is low in S phase when recombination is active, but increases as cells progress towards mitosis. In response to DNA damage, double-strand break repair by homologous recombination a reduction of CDK2-mediated BRCA2 phosphorylation. Involved in regulation of telomere repair by mediating phosphorylation of NBN. Phosphorylation of RB1 disturbs its interaction with E2F1. NPM1 phosphorylation by cyclin E/CDK2 promotes its dissociation from unduplicated centrosomes, thus initiating centrosome duplication. Cyclin E/CDK2-mediated phosphorylation of NPAT at G1-S transition and until prophase stimulates the NPAT-mediated activation of histone gene transcription during S phase. Required for vitamin D-mediated growth inhibition by being itself inactivated. Involved in the nitric oxide- (NO) mediated signaling in a nitrosylation/activation-dependent manner. USP37 is activated by phosphorylation and thus triggers G1-S transition. CTNNB1 phosphorylation regulates insulin internalization. Phosphorylates FOXP3 and negatively regulates its transcriptional activity and protein stability. Phosphorylates ERCC6 which is essential for its chromatin remodeling activity at DNA double-strand breaks. Acts as a regulator of the phosphatidylinositol 3-kinase/protein kinase B signal transduction by mediating phosphorylation of the C-terminus of protein kinase B (PKB/AKT1 and PKB/AKT2), promoting its activation. This is Cyclin-dependent kinase 2 (CDK2) from Bos taurus (Bovine).